We begin with the raw amino-acid sequence, 278 residues long: Formyltetrahydrofolate deformylase (278 aa).

The ACT domain occupies 6 to 85 (ILLTDCPDDK…RLIGTQRKRI (80 aa)). D223 is an active-site residue.

The protein belongs to the PurU family.

The enzyme catalyses (6R)-10-formyltetrahydrofolate + H2O = (6S)-5,6,7,8-tetrahydrofolate + formate + H(+). Its pathway is purine metabolism; IMP biosynthesis via de novo pathway; formate from 10-formyl-5,6,7,8-tetrahydrofolate: step 1/1. In terms of biological role, catalyzes the hydrolysis of 10-formyltetrahydrofolate (formyl-FH4) to formate and tetrahydrofolate (FH4). This Haemophilus influenzae (strain ATCC 51907 / DSM 11121 / KW20 / Rd) protein is Formyltetrahydrofolate deformylase.